Here is a 310-residue protein sequence, read N- to C-terminus: Protein-L-isoaspartate O-methyltransferase (310 aa).

Disordered stretches follow at residues methionine 1 to alanine 44 and alanine 67 to proline 88. The span at glutamate 14–glutamate 29 shows a compositional bias: basic and acidic residues. A compositionally biased stretch (low complexity) spans alanine 32–alanine 44. Residues proline 75–alanine 86 are compositionally biased toward pro residues. Serine 157 is a catalytic residue.

Belongs to the methyltransferase superfamily. L-isoaspartyl/D-aspartyl protein methyltransferase family.

The protein localises to the cytoplasm. It carries out the reaction [protein]-L-isoaspartate + S-adenosyl-L-methionine = [protein]-L-isoaspartate alpha-methyl ester + S-adenosyl-L-homocysteine. Catalyzes the methyl esterification of L-isoaspartyl residues in peptides and proteins that result from spontaneous decomposition of normal L-aspartyl and L-asparaginyl residues. It plays a role in the repair and/or degradation of damaged proteins. This chain is Protein-L-isoaspartate O-methyltransferase, found in Burkholderia orbicola (strain MC0-3).